The following is a 664-amino-acid chain: Fructose-1,6-bisphosphatase class 3 (664 aa).

This sequence belongs to the FBPase class 3 family. Mn(2+) is required as a cofactor.

The catalysed reaction is beta-D-fructose 1,6-bisphosphate + H2O = beta-D-fructose 6-phosphate + phosphate. It participates in carbohydrate biosynthesis; gluconeogenesis. This chain is Fructose-1,6-bisphosphatase class 3, found in Bacteroides fragilis (strain YCH46).